We begin with the raw amino-acid sequence, 197 residues long: NADH-quinone oxidoreductase subunit C (197 aa).

It belongs to the complex I 30 kDa subunit family. In terms of assembly, NDH-1 is composed of 14 different subunits. Subunits NuoB, C, D, E, F, and G constitute the peripheral sector of the complex.

The protein resides in the cell inner membrane. The catalysed reaction is a quinone + NADH + 5 H(+)(in) = a quinol + NAD(+) + 4 H(+)(out). Its function is as follows. NDH-1 shuttles electrons from NADH, via FMN and iron-sulfur (Fe-S) centers, to quinones in the respiratory chain. The immediate electron acceptor for the enzyme in this species is believed to be ubiquinone. Couples the redox reaction to proton translocation (for every two electrons transferred, four hydrogen ions are translocated across the cytoplasmic membrane), and thus conserves the redox energy in a proton gradient. In Neisseria meningitidis serogroup A / serotype 4A (strain DSM 15465 / Z2491), this protein is NADH-quinone oxidoreductase subunit C.